We begin with the raw amino-acid sequence, 89 residues long: Small ribosomal subunit protein uS15 (89 aa).

Basic and acidic residues predominate over residues 1 to 10 (MSITAERKAE). Residues 1–24 (MSITAERKAEVIQGNANKAGDTGS) are disordered.

This sequence belongs to the universal ribosomal protein uS15 family. In terms of assembly, part of the 30S ribosomal subunit. Forms a bridge to the 50S subunit in the 70S ribosome, contacting the 23S rRNA.

Its function is as follows. One of the primary rRNA binding proteins, it binds directly to 16S rRNA where it helps nucleate assembly of the platform of the 30S subunit by binding and bridging several RNA helices of the 16S rRNA. Functionally, forms an intersubunit bridge (bridge B4) with the 23S rRNA of the 50S subunit in the ribosome. This is Small ribosomal subunit protein uS15 from Rhodopseudomonas palustris (strain HaA2).